The primary structure comprises 399 residues: Putative cytochrome P450 133B2 (399 aa).

Residue Cys348 coordinates heme.

Belongs to the cytochrome P450 family. The cofactor is heme.

This Xylella fastidiosa (strain Temecula1 / ATCC 700964) protein is Putative cytochrome P450 133B2 (cyp133B2).